The chain runs to 303 residues: Monoglyceride lipase (303 aa).

The residue at position 10 (Thr10) is a Phosphothreonine. 3'-nitrotyrosine is present on Tyr58. Ser122 acts as the Nucleophile in catalysis. Phosphoserine is present on Ser189. Residues Asp239 and His269 each act as charge relay system in the active site.

It belongs to the AB hydrolase superfamily. Monoacylglycerol lipase family. In terms of assembly, homodimer. In terms of tissue distribution, ubiquitous. Highly expressed in adipose tissue, adrenal gland, ovary, heart, spleen, lung, skeletal muscle, kidney and testis. Highly expressed throughout the brain.

The protein localises to the cytoplasm. Its subcellular location is the cytosol. It is found in the membrane. The catalysed reaction is Hydrolyzes glycerol monoesters of long-chain fatty acids.. It catalyses the reaction a 1-acylglycerol + H2O = glycerol + a fatty acid + H(+). It carries out the reaction a 2-acylglycerol + H2O = glycerol + a fatty acid + H(+). The enzyme catalyses 1-octanoylglycerol + H2O = octanoate + glycerol + H(+). The catalysed reaction is 2-(5Z,8Z,11Z,14Z-eicosatetraenoyl)-glycerol + H2O = glycerol + (5Z,8Z,11Z,14Z)-eicosatetraenoate + H(+). It catalyses the reaction 1-decanoylglycerol + H2O = decanoate + glycerol + H(+). It carries out the reaction 1-dodecanoylglycerol + H2O = dodecanoate + glycerol + H(+). The enzyme catalyses 1-tetradecanoylglycerol + H2O = tetradecanoate + glycerol + H(+). The catalysed reaction is 2-hexadecanoylglycerol + H2O = glycerol + hexadecanoate + H(+). It catalyses the reaction 1-(9Z-octadecenoyl)-glycerol + H2O = glycerol + (9Z)-octadecenoate + H(+). It carries out the reaction 2-(9Z-octadecenoyl)-glycerol + H2O = glycerol + (9Z)-octadecenoate + H(+). The enzyme catalyses 2-(9Z,12Z-octadecadienoyl)-glycerol + H2O = (9Z,12Z)-octadecadienoate + glycerol + H(+). The catalysed reaction is 1-(5Z,8Z,11Z,14Z-eicosatetraenoyl)-glycerol + H2O = glycerol + (5Z,8Z,11Z,14Z)-eicosatetraenoate + H(+). It catalyses the reaction 1-(9Z,12Z-octadecadienoyl)-glycerol + H2O = (9Z,12Z)-octadecadienoate + glycerol + H(+). It carries out the reaction 1-hexadecanoylglycerol + H2O = glycerol + hexadecanoate + H(+). The enzyme catalyses 1-octadecanoylglycerol + H2O = octadecanoate + glycerol + H(+). The catalysed reaction is prostaglandin E2 1-glyceryl ester + H2O = prostaglandin E2 + glycerol + H(+). It catalyses the reaction prostaglandin D2-1-glycerol ester + H2O = prostaglandin D2 + glycerol + H(+). It carries out the reaction 2-glyceryl-15-deoxy-Delta(12,14)-prostaglandin J2 + H2O = 15-deoxy-Delta(12,14)-prostaglandin J2 + glycerol + H(+). The enzyme catalyses prostaglandin F2alpha 1-glyceryl ester + H2O = prostaglandin F2alpha + glycerol + H(+). It participates in glycerolipid metabolism; triacylglycerol degradation. Converts monoacylglycerides to free fatty acids and glycerol. Hydrolyzes the endocannabinoid 2-arachidonoylglycerol, and thereby contributes to the regulation of endocannabinoid signaling, nociperception and perception of pain. Regulates the levels of fatty acids that serve as signaling molecules and promote cancer cell migration, invasion and tumor growth. This Rattus norvegicus (Rat) protein is Monoglyceride lipase.